The sequence spans 403 residues: Alkaline protease 1 (403 aa).

A signal peptide spans 1 to 21 (MQSIKRTLLLLGAILPAVLGA). Residues 22 to 125 (PVQETRRAAE…QIYYLDGLTT (104 aa)) constitute a propeptide that is removed on maturation. Residues 36 to 120 (KYIVTFKPGI…YVEEDQIYYL (85 aa)) enclose the Inhibitor I9 domain. The 274-residue stretch at 130–403 (PWGLGSISHK…PNLLAYNGNA (274 aa)) folds into the Peptidase S8 domain. Active-site charge relay system residues include Asp162 and His193. Asn253 carries an N-linked (GlcNAc...) asparagine glycan. Catalysis depends on Ser349, which acts as the Charge relay system.

The protein belongs to the peptidase S8 family.

It localises to the secreted. It catalyses the reaction Hydrolysis of proteins with broad specificity, and of Bz-Arg-OEt &gt; Ac-Tyr-OEt. Does not hydrolyze peptide amides.. In terms of biological role, secreted alkaline protease that allows assimilation of proteinaceous substrates. This is Alkaline protease 1 (alp1) from Aspergillus flavus (strain ATCC 200026 / FGSC A1120 / IAM 13836 / NRRL 3357 / JCM 12722 / SRRC 167).